Reading from the N-terminus, the 233-residue chain is Gamma-glutamyl-hercynylcysteine sulfoxide hydrolase (233 aa).

C2 acts as the Nucleophile in catalysis. Residues 2–233 (CRHLGWLGAQ…TALDRAKGPR (232 aa)) form the Glutamine amidotransferase type-2 domain.

It carries out the reaction gamma-L-glutamyl-hercynylcysteine S-oxide + H2O = S-(hercyn-2-yl)-L-cysteine S-oxide + L-glutamate. It participates in amino-acid biosynthesis; ergothioneine biosynthesis. Catalyzes the hydrolysis of the gamma-glutamyl amide bond of hercynyl-gamma-L-glutamyl-L-cysteine sulfoxide to produce hercynylcysteine sulfoxide, a step in the biosynthesis pathway of ergothioneine. Ergothioneine is an antioxidant that protects mycobacteria from oxidative stress. The chain is Gamma-glutamyl-hercynylcysteine sulfoxide hydrolase (egtC) from Mycobacterium tuberculosis (strain ATCC 25618 / H37Rv).